A 252-amino-acid chain; its full sequence is MKICLVDETGAGDGALSVLAARWGLEHDENNPMALVLTTAHLELRKRDEPKLGGIFVDFVGGAMAHRRKFGGGRGEAVAKAVGIKGDYLPDVVDATAGLGRDAFVLASVGCRVRMLERNPVVAALLDDGLARGYADPEIGPWLQERLQLIHASSLTALTDITPRPQVVYLDPMFPHKQKSALVKKEMRVFQSLVGPDLDADGLLAPARQLATKRVVVKRPDYAPPLADIATPNAVVTKGHRFDIYTGTALVE.

S-adenosyl-L-methionine contacts are provided by residues 101 to 102 (RD), 117 to 118 (ER), 153 to 154 (SS), and D171.

This sequence belongs to the methyltransferase superfamily. RsmJ family.

The protein resides in the cytoplasm. The catalysed reaction is guanosine(1516) in 16S rRNA + S-adenosyl-L-methionine = N(2)-methylguanosine(1516) in 16S rRNA + S-adenosyl-L-homocysteine + H(+). Its function is as follows. Specifically methylates the guanosine in position 1516 of 16S rRNA. The protein is Ribosomal RNA small subunit methyltransferase J of Citrobacter koseri (strain ATCC BAA-895 / CDC 4225-83 / SGSC4696).